The sequence spans 307 residues: Acetaldehyde dehydrogenase 2 (307 aa).

13–16 is a binding site for NAD(+); it reads SGNI. The Acyl-thioester intermediate role is filled by C132. Residues 163–171 and N274 each bind NAD(+); that span reads SIGPGTRAN.

Belongs to the acetaldehyde dehydrogenase family.

It catalyses the reaction acetaldehyde + NAD(+) + CoA = acetyl-CoA + NADH + H(+). In Methylibium petroleiphilum (strain ATCC BAA-1232 / LMG 22953 / PM1), this protein is Acetaldehyde dehydrogenase 2.